Consider the following 124-residue polypeptide: Small ribosomal subunit protein uS11 (124 aa).

This sequence belongs to the universal ribosomal protein uS11 family. As to quaternary structure, part of the 30S ribosomal subunit.

Located on the platform of the 30S subunit. This chain is Small ribosomal subunit protein uS11, found in Methanococcus aeolicus (strain ATCC BAA-1280 / DSM 17508 / OCM 812 / Nankai-3).